The chain runs to 492 residues: MATFKDACFHYRKITKLNRELLRIGANSVWIPVSSNKIKGWCIECCQLTELTFCHGCSLAHVCQWCIQNKRCFLDNEPHLLKLRSFESPITKEKLQCIIDLYNLLFPINPGIINRFKKIVNQRKCRNEFEQSWYNQLLFPITLNAAVFKFHSREVYVFGLYEGSSSCIDLPYRIVNCIDLYDRLLLDQINFERMSSLPASLQSVYANKYFKLSRLPSMKLKQIYYSDFSKQNLINKCKIKSRIVLRNLTEFTWDSQVSLHNDVINNKEKILTALSTSSLKRFETHDLNLGRVKADIFELGHHCKPNYISSNHWQPASKVSQCRWCNVKYVFRNMDWKMESMYNELLSFIQACYKSNVNVGNCSSIESAYPLVKDMLWHSITKYIDQTIEKLFNVMNPVKVDGQQVISFHWQIDVALYIHIKMILKTETLPFAFTLNQFRSIIKGIVNQWYDVTELDYLPLCTEQTDKLVKLEEEGKISEEHELLISDSEDDD.

An RNA-binding region spans residues Met-1–Leu-81. The segment at Cys-42–His-79 is zinc-binding domain. Residues Lys-82–Asn-176 form an important for cytoskeleton localization region. The interaction with host IRF3 stretch occupies residues Lys-318 to Asp-492. The pLxIS motif motif lies at Leu-483–Ser-486.

The protein belongs to the rotavirus NSP1 family. Interacts (via C-terminus) with host IRF3; this interaction leads to IRF3 degradation. Interacts with host IRF7; this interaction leads to IRF7 degradation. Interacts with host CUL1 and CUL3.

It is found in the host cytoplasm. The protein localises to the host cytoskeleton. Functionally, plays a role in the inhibition of host innate immunity by inducing the degradation of key host factors required to activate interferon production such as IRF3, IRF5 or IRF7. Associates with components of cullin RING ligases (CRLs) including CUL1 or CUL3, which are essential multisubunit ubiquitination complexes, to modulate their activities. The polypeptide is Non-structural protein 1 (Rotavirus A (isolate RVA/Cat/Japan/FRV64/1989/G3P5B[3]) (RV-A)).